Reading from the N-terminus, the 159-residue chain is Phosphopantetheine adenylyltransferase (159 aa).

Ser-9 lines the substrate pocket. Residues 9 to 10 (SF) and His-17 each bind ATP. Residues Lys-41, Leu-74, and Lys-88 each coordinate substrate. Residues 89–91 (GLR), Glu-99, and 123–129 (YGYISST) contribute to the ATP site.

This sequence belongs to the bacterial CoaD family. Homohexamer. The cofactor is Mg(2+).

It localises to the cytoplasm. The catalysed reaction is (R)-4'-phosphopantetheine + ATP + H(+) = 3'-dephospho-CoA + diphosphate. The protein operates within cofactor biosynthesis; coenzyme A biosynthesis; CoA from (R)-pantothenate: step 4/5. Its function is as follows. Reversibly transfers an adenylyl group from ATP to 4'-phosphopantetheine, yielding dephospho-CoA (dPCoA) and pyrophosphate. The sequence is that of Phosphopantetheine adenylyltransferase from Corynebacterium diphtheriae (strain ATCC 700971 / NCTC 13129 / Biotype gravis).